The following is a 224-amino-acid chain: Ribosomal RNA large subunit methyltransferase E (224 aa).

Residues glycine 64, tryptophan 66, aspartate 97, aspartate 113, and aspartate 138 each contribute to the S-adenosyl-L-methionine site. The Proton acceptor role is filled by lysine 178.

It belongs to the class I-like SAM-binding methyltransferase superfamily. RNA methyltransferase RlmE family.

It is found in the cytoplasm. The catalysed reaction is uridine(2552) in 23S rRNA + S-adenosyl-L-methionine = 2'-O-methyluridine(2552) in 23S rRNA + S-adenosyl-L-homocysteine + H(+). Its function is as follows. Specifically methylates the uridine in position 2552 of 23S rRNA at the 2'-O position of the ribose in the fully assembled 50S ribosomal subunit. The sequence is that of Ribosomal RNA large subunit methyltransferase E from Albidiferax ferrireducens (strain ATCC BAA-621 / DSM 15236 / T118) (Rhodoferax ferrireducens).